The chain runs to 468 residues: Squamosa promoter-binding-like protein 5 (468 aa).

The SBP-type zinc finger occupies 204–281; sequence PPRCQAEGCK…TEHNRRRRKP (78 aa). Residues Cys207, Cys212, Cys229, His232, Cys248, Cys251, His255, and Cys267 each contribute to the Zn(2+) site. A Bipartite nuclear localization signal motif is present at residues 264–280; sequence KRSCRKRLTEHNRRRRK. Disordered regions lie at residues 270–305, 354–374, and 405–458; these read RLTE…DASI, TLSL…DGGL, and HHHL…SNNN. The segment covering 363-372 has biased composition (acidic residues); the sequence is QEEDDEDEDG. The segment covering 438–458 has biased composition (low complexity); that stretch reads NNNNILSCSSASDQQNSSNNN.

Ubiquitous.

The protein resides in the nucleus. Its function is as follows. Trans-acting factor that binds specifically to the consensus nucleotide sequence 5'-TNCGTACAA-3'. The protein is Squamosa promoter-binding-like protein 5 (SPL5) of Oryza sativa subsp. japonica (Rice).